We begin with the raw amino-acid sequence, 1099 residues long: MYITPLFFPNLLKLQRKSFLTFLKYGIKKEIKKLDITKNKKKLLVYPNLFQLNLPTYTCNECVITSKTYNCELVIPIRLISYKDEIEWITLTNIPIMTNKCNFITNGSPRVIMSQITRAPGIYYHKENENTYYADIIAERGNWLRIEIDKKNNIWMKVKKVPKVPALMFLQALGVTKSNLIKLLKYPIPNQNHNLGNFKSQKEALEKIELYSQLESSINSRNLKNQNKITIFDRFMNPKYYDLGTRGRIQINKKFNNIEETIQHSTLTSKDFILAVHFLLKIKYKIEETDDIDNLKNKRVKIAGELIQSQFGIGILRLQKYVKDKLGNIKNNLHLTNIFSSTPINTTLAEFFGVNPLSQFMDEVNPLATLTHKRRLSSLGIGGVNRDTATLTIRSIHPTLYGRICPIETPEGKNAGLVNSFALFAEINSEGLIETPFFRVCNGRILYEMGINYLSANQEDKSNIVPFDIKKSRIGFLSKNKIAARIKQQFKEVSKKKVDFISISQLQMLSVATSLIPFMEHNDANRVLMGSNMQRQAVPLLKTECCLVGTGLETKIFFDLQDNVKSPPNGFISYLSLKKITISNIRNEHKSFNFKSNPLETITCIKSKSRNFNRLKYNLKDLLTNSKESLKITNYMSYVREQKIQYYIKQYNSSNQGTCSVNRLTLNEGQFIIKKNPLISGLSSCRNELALGKNLFVGYISWKGYNFEDAIVLNEQLVINNIYTSTHLEKFETEIKKNKENSEIITRDIKNISFLNKKNLDKNGIIKIGSRVFSDDILVGKLLPIETRILSPYRKLLYEILQKQNDHYRNTSLRVPKYKRGRITFVDYIKDKGKIKKKTEILKDLKTIKIHLMQNRLIQIGDKISGRHGNKGVISKILKIQEMPYLNDGIPLDILLNPLGVPSRMNIGQVLECLLGLSCFYLQRRFKVIPFDESFGFEVSRNFIYSNLYFSNIKTGNNWLLHPYYPGKNRIFDSYSGLPFDQPITIGKAYILKLIHLVEEKVHARSTGSYSLVTQQPLKGKSKKGGQRVGEMEVWALEGYGAAYTLHEILTVKSDDIKSRQKVLTSILNSETIKFGTTETFKVLIRELQSLCLNIQFFK.

The protein belongs to the RNA polymerase beta chain family. In plastids the minimal PEP RNA polymerase catalytic core is composed of four subunits: alpha, beta, beta', and beta''. When a (nuclear-encoded) sigma factor is associated with the core the holoenzyme is formed, which can initiate transcription.

The protein resides in the plastid. The protein localises to the chloroplast. The catalysed reaction is RNA(n) + a ribonucleoside 5'-triphosphate = RNA(n+1) + diphosphate. In terms of biological role, DNA-dependent RNA polymerase catalyzes the transcription of DNA into RNA using the four ribonucleoside triphosphates as substrates. The polypeptide is DNA-directed RNA polymerase subunit beta (Bigelowiella natans (Pedinomonas minutissima)).